A 210-amino-acid polypeptide reads, in one-letter code: MIHGLLGRKIGMMQYFTKEGRAIPVTVIAAGPCIVTQIRTPERDGYSAVQLGYEEVEARKLTKPQQGHLKASGGKMLRYLREFSADDPLAHKPGEVVTVELFKPGQKVDISGTSKGRGFAGVVKRHGFRGGPKTHGQSDRHRAPGSIGAGTTPGRVWKGQRMAGRMGGDRVTIQNLEVVEVLPEQNLLLVKGSVPGARNGLLQIRKAVKG.

Residues 125-154 (RHGFRGGPKTHGQSDRHRAPGSIGAGTTPG) are disordered.

The protein belongs to the universal ribosomal protein uL3 family. In terms of assembly, part of the 50S ribosomal subunit. Forms a cluster with proteins L14 and L19.

Its function is as follows. One of the primary rRNA binding proteins, it binds directly near the 3'-end of the 23S rRNA, where it nucleates assembly of the 50S subunit. The protein is Large ribosomal subunit protein uL3 of Chloroflexus aggregans (strain MD-66 / DSM 9485).